Here is a 550-residue protein sequence, read N- to C-terminus: Dihydroxy-acid dehydratase (550 aa).

D78 lines the Mg(2+) pocket. A [2Fe-2S] cluster-binding site is contributed by C119. Mg(2+)-binding residues include D120 and K121. Position 121 is an N6-carboxylysine (K121). C191 contacts [2Fe-2S] cluster. Residue E440 coordinates Mg(2+). S466 functions as the Proton acceptor in the catalytic mechanism.

Belongs to the IlvD/Edd family. As to quaternary structure, homodimer. The cofactor is [2Fe-2S] cluster. Requires Mg(2+) as cofactor.

It carries out the reaction (2R)-2,3-dihydroxy-3-methylbutanoate = 3-methyl-2-oxobutanoate + H2O. The enzyme catalyses (2R,3R)-2,3-dihydroxy-3-methylpentanoate = (S)-3-methyl-2-oxopentanoate + H2O. It functions in the pathway amino-acid biosynthesis; L-isoleucine biosynthesis; L-isoleucine from 2-oxobutanoate: step 3/4. Its pathway is amino-acid biosynthesis; L-valine biosynthesis; L-valine from pyruvate: step 3/4. Functions in the biosynthesis of branched-chain amino acids. Catalyzes the dehydration of (2R,3R)-2,3-dihydroxy-3-methylpentanoate (2,3-dihydroxy-3-methylvalerate) into 2-oxo-3-methylpentanoate (2-oxo-3-methylvalerate) and of (2R)-2,3-dihydroxy-3-methylbutanoate (2,3-dihydroxyisovalerate) into 2-oxo-3-methylbutanoate (2-oxoisovalerate), the penultimate precursor to L-isoleucine and L-valine, respectively. This is Dihydroxy-acid dehydratase from Methanococcus maripaludis (strain C6 / ATCC BAA-1332).